A 260-amino-acid chain; its full sequence is Flap endonuclease Xni (260 aa).

D109 contributes to the Mg(2+) binding site. The region spanning 165-259 is the 5'-3' exonuclease domain; it reads VKPSQLADYW…DIRFTGPNKA (95 aa). The K(+) site is built by L176, P185, V187, and I190. Positions 189 to 194 are interaction with DNA; that stretch reads GIGPKA.

This sequence belongs to the Xni family. The cofactor is Mg(2+). It depends on K(+) as a cofactor.

In terms of biological role, has flap endonuclease activity. During DNA replication, flap endonucleases cleave the 5'-overhanging flap structure that is generated by displacement synthesis when DNA polymerase encounters the 5'-end of a downstream Okazaki fragment. This Vibrio parahaemolyticus serotype O3:K6 (strain RIMD 2210633) protein is Flap endonuclease Xni.